Here is an 807-residue protein sequence, read N- to C-terminus: Phenylalanine--tRNA ligase beta subunit (807 aa).

The region spanning 39-156 (AGEFSGVVIG…SDAPLGQCVR (118 aa)) is the tRNA-binding domain. Residues 409–488 (PQTKDVNLRR…RIFGYNNIPN (80 aa)) enclose the B5 domain. Mg(2+)-binding residues include Asp-466, Asp-472, Glu-475, and Glu-476. The 94-residue stretch at 713 to 806 (SRFPANRRDL…LKTELNASLR (94 aa)) folds into the FDX-ACB domain.

Belongs to the phenylalanyl-tRNA synthetase beta subunit family. Type 1 subfamily. As to quaternary structure, tetramer of two alpha and two beta subunits. It depends on Mg(2+) as a cofactor.

The protein resides in the cytoplasm. It catalyses the reaction tRNA(Phe) + L-phenylalanine + ATP = L-phenylalanyl-tRNA(Phe) + AMP + diphosphate + H(+). This chain is Phenylalanine--tRNA ligase beta subunit, found in Colwellia psychrerythraea (strain 34H / ATCC BAA-681) (Vibrio psychroerythus).